Here is an 83-residue protein sequence, read N- to C-terminus: Large ribosomal subunit protein eL31 (83 aa).

Belongs to the eukaryotic ribosomal protein eL31 family.

This chain is Large ribosomal subunit protein eL31, found in Methanococcus aeolicus (strain ATCC BAA-1280 / DSM 17508 / OCM 812 / Nankai-3).